A 239-amino-acid polypeptide reads, in one-letter code: Large ribosomal subunit protein uL1 (239 aa).

Belongs to the universal ribosomal protein uL1 family. Part of the 50S ribosomal subunit.

In terms of biological role, binds directly to 23S rRNA. The L1 stalk is quite mobile in the ribosome, and is involved in E site tRNA release. Its function is as follows. Protein L1 is also a translational repressor protein, it controls the translation of the L11 operon by binding to its mRNA. The chain is Large ribosomal subunit protein uL1 from Rhodococcus erythropolis (strain PR4 / NBRC 100887).